A 612-amino-acid chain; its full sequence is Transcription factor unc-37 (612 aa).

The tract at residues 143-228 (FASPHVNGGD…SNSRARQQQQ (86 aa)) is disordered. The segment covering 150–159 (GGDGAGGSSG) has biased composition (gly residues). A CCN domain region spans residues 153–196 (GAGGSSGGASEAKKAKLEDPDDGELEIDVTNDDHPSTASNGGAA). Residues 171–182 (DPDDGELEIDVT) show a composition bias toward acidic residues. Residues 202–221 (DSTNSVASSGASTPSIASNS) show a composition bias toward polar residues. 6 WD repeats span residues 308–339 (GIPTGLKKKMELNHGEVVCAATISRDNSRVYT), 372–402 (LKENYIRSCKLFEDGNTLLIGGEASTVALWD), 414–444 (TDSQACYALAMSPDEKLLFACLADGNILIYD), 456–486 (GHQDGASCLDLSKDGTKLWSGGLDNSVRCWD), 538–568 (QHESCVLSLKFAHSGKFFISTGKDNALNAWR), and 579–609 (KENSSVLSCDISFDDSLIVTGSGEKKATLYA).

It belongs to the WD repeat Groucho/TLE family. As to quaternary structure, interacts with unc-4. Interacts with ref-1. May interact with mls-1.

The protein resides in the nucleus. Transcriptional corepressor that functions with the neural specificity gene unc-4 to govern motor neuron identity. In concert with unc-4, represses the expression of VB-specific genes such as ceh-12, thereby preventing the adoption of VB motor neuron fate. May function with transcription factor mls-1 to promote uterine muscle specification and formation. This Caenorhabditis elegans protein is Transcription factor unc-37 (unc-37).